Here is a 260-residue protein sequence, read N- to C-terminus: MVKEKEKPKNEIIIETENLSLFYTDFKALNEINIKILKNSITALIGPSGCGKSTFLRTLNRMNDLVEGIKIEGNVIYEGKNIYSNNFDILELRRKIGMVFQTPNPFLMSIYDNISYGPKIHGTKDKKKLDEIVEQSLKKSALWDEVKDKLNTNALSLSGGQQQRLCIARTLAIEPNVILMDEPTSALDPISTGKIEELIINLKESYTIIIVTHNMQQAGRISDKTAFFLNGCIEEESPTDELFFNPKNTKTEEYISGKFG.

Residues 14-255 form the ABC transporter domain; sequence IETENLSLFY…PKNTKTEEYI (242 aa). 46–53 is an ATP binding site; that stretch reads GPSGCGKS.

This sequence belongs to the ABC transporter superfamily. Phosphate importer (TC 3.A.1.7) family. As to quaternary structure, the complex is composed of two ATP-binding proteins (PstB), two transmembrane proteins (PstC and PstA) and a solute-binding protein (PstS).

It localises to the cell inner membrane. The enzyme catalyses phosphate(out) + ATP + H2O = ADP + 2 phosphate(in) + H(+). In terms of biological role, part of the ABC transporter complex PstSACB involved in phosphate import. Responsible for energy coupling to the transport system. This Borrelia garinii subsp. bavariensis (strain ATCC BAA-2496 / DSM 23469 / PBi) (Borreliella bavariensis) protein is Phosphate import ATP-binding protein PstB.